The sequence spans 142 residues: Mitochondrial import receptor subunit TOM22 homolog (142 aa).

The segment covering 1–11 (MAAAVAAAGAG) has biased composition (low complexity). The tract at residues 1-40 (MAAAVAAAGAGEPLSPEELVPKAEAEKAEEDLEEDDDDEL) is disordered. Ala2 carries the post-translational modification N-acetylalanine. The Cytoplasmic segment spans residues 2–82 (AAAVAAAGAG…VAQKMYRFSR (81 aa)). Phosphoserine is present on Ser15. Over residues 27-40 (KAEEDLEEDDDDEL) the composition is skewed to acidic residues. An import sequence; necessary for mitochondrion outer membrane localization and integration in the TOM complex region spans residues 41–50 (DETLSERLWG). A Phosphothreonine modification is found at Thr43. Ser45 bears the Phosphoserine mark. Residues 83–103 (AALWIGTTSFMILVLPVVFET) traverse the membrane as a helical segment. The interval 83–103 (AALWIGTTSFMILVLPVVFET) is TMD; necessary for mitochondrion outer membrane localization and integration in the TOM complex. Residues 104–142 (EKLQMEQQQQLQQRQILLGPNTGLSGGMPGALPPLPGKI) lie on the Mitochondrial intermembrane side of the membrane. The tract at residues 123 to 142 (PNTGLSGGMPGALPPLPGKI) is C-tail signal; necessary for mitochondrion outer membrane localization and integration in the TOM complex.

This sequence belongs to the Tom22 family. Forms part of the preprotein translocase complex of the outer mitochondrial membrane (TOM complex) which consists of at least 7 different proteins (TOMM5, TOMM6, TOMM7, TOMM20, TOMM22, TOMM40 and TOMM70). Interacts with TOMM40. Interacts with PPP2R2B.

It is found in the mitochondrion outer membrane. Its function is as follows. Central receptor component of the translocase of the outer membrane of mitochondria (TOM complex) responsible for the recognition and translocation of cytosolically synthesized mitochondrial preproteins. Together with the peripheral receptor TOM20 functions as the transit peptide receptor and facilitates the movement of preproteins into the translocation pore. Required for the translocation across the mitochondrial outer membrane of cytochrome P450 monooxygenases. In Rattus norvegicus (Rat), this protein is Mitochondrial import receptor subunit TOM22 homolog (Tomm22).